A 286-amino-acid polypeptide reads, in one-letter code: Pyridoxal kinase PdxY (286 aa).

Substrate contacts are provided by residues serine 9 and 44 to 45 (TQ). 3 residues coordinate ATP: aspartate 111, glutamate 148, and lysine 181. Aspartate 222 contributes to the substrate binding site.

This sequence belongs to the pyridoxine kinase family. PdxY subfamily. Homodimer. It depends on Mg(2+) as a cofactor.

It carries out the reaction pyridoxal + ATP = pyridoxal 5'-phosphate + ADP + H(+). Its pathway is cofactor metabolism; pyridoxal 5'-phosphate salvage; pyridoxal 5'-phosphate from pyridoxal: step 1/1. Functionally, pyridoxal kinase involved in the salvage pathway of pyridoxal 5'-phosphate (PLP). Catalyzes the phosphorylation of pyridoxal to PLP. The sequence is that of Pyridoxal kinase PdxY from Histophilus somni (strain 129Pt) (Haemophilus somnus).